A 229-amino-acid polypeptide reads, in one-letter code: Ribonuclease 3 (229 aa).

In terms of domain architecture, RNase III spans 4–133 (WEELQESVGF…FIGALYLDNG (130 aa)). E46 is a binding site for Mg(2+). The active site involves D50. Mg(2+) contacts are provided by D119 and E122. E122 is a catalytic residue. The DRBM domain occupies 159–228 (DYKTQLQEIV…AQFAINQLTH (70 aa)).

This sequence belongs to the ribonuclease III family. In terms of assembly, homodimer. Mg(2+) serves as cofactor.

It localises to the cytoplasm. The enzyme catalyses Endonucleolytic cleavage to 5'-phosphomonoester.. Its function is as follows. Digests double-stranded RNA. Involved in the processing of primary rRNA transcript to yield the immediate precursors to the large and small rRNAs (23S and 16S). Processes some mRNAs, and tRNAs when they are encoded in the rRNA operon. Processes pre-crRNA and tracrRNA of type II CRISPR loci if present in the organism. The chain is Ribonuclease 3 from Listeria monocytogenes serotype 4b (strain CLIP80459).